The primary structure comprises 1265 residues: MELLGVRQPFGPQFQEEKYQMLELNHRLESYLGRVKLLEEENKLLREEIHTLKSSRDPAGQRKAQEEALSQARRMMEEAWRKKDCVELEVENLMEDMEKVSFQRKKVKTAQAEAQRKLTESRKELEEERRAQIWLREKVGQLEKDLMLQMQVHQENMETMQASLKQTKQVLMAPQRVQATSIPDLGQEYGYKAAQAWQEAANNYQKQVGRLEESLNQTKANMTKIYQEKRESQRQVQHLAKELESTRIKRQMLEKHAMQQREEQKEELQHLQAQVNTLELEKDCLGQQIDSLMLDRQHLLQVKMSLGLEVATYRALLDSEGLRIDRPTPNKTSSTVFLDALSKPTGIQSTSQTTAASCLLSSSVSTSHRSIASSRSLLTSAAPSWTLTRGTPQRPPSSTSMTEKTEDHISEETKRSAEESVDQLQQEKVQQDWTLESTLPKTSAEPKPELQPEEIKVEDEANEPQQAHMVESKTDESELTSVPAEQQGSMSQTPETKSWAGHFNDPAEVSEDGKDEDTEVSVEMARISHAPKVAWEEIKSAVEDEKDDASEMDVRSEIISESHTFAYGDAENDSNTLTSSHISQNTNALASSFLEQGTLDSASYFGYEATNENLMKEEELDNVSNISEEVTEQLNSETEAAIDSINEWDRQEESEPENETKVMTSYFEVEEGEMSINTDTKDKTEDDIEREELEVTEREILVQSAGGMLGVDLPNDTDHQDEHNLPQIELNEDQSEAEEENQKEKQCDEDDSPNISASLKTDPGEGDSYSQEHTLADTRPLIRYKSDEETSHHIGETSDSEDEKERIDQGHLNEKRFNTMEDLTEEPDMEVTGKMRLEDLVSNEEAAADDVASVMFQKVSGDHESLDVVVQESERKGNLEKEDSGDADNMRDNKEEDVSVFEQNENQQLTEHQHVHTEQVEDKPVHSHETQEHVNTEFSSTFSERSQQEQLEESSLTMFEDEAATKEAEDSDVSMHTNIDLIDSRSLESEINGQPDIMTSDMANSECNSSEDESPNASQCFQNTSLLAAATPNEQPLTFTNEVSKADYVSDNNDVPEEVLSEEKSTDEPKASQIDDLENFNIWGESTSISDAAQTTHASMDEHSSISPVNENLESSNKIPSVAENIFGHFEEHLERSVESFPEKEVTVMDFENNDLGEEFQSKQMKSEIHSFFSTSLKQDFWSEGKMEMAATYDPAKTEDLNQAMVFGEEWREIGVQSANGDTKEEMEILKIRDDKQKDGQPAQSKIVQSDDSADEGDSWSSGDE.

The head stretch occupies residues 1-16; it reads MELLGVRQPFGPQFQE. The coil 1A stretch occupies residues 17 to 52; it reads EKYQMLELNHRLESYLGRVKLLEEENKLLREEIHTL. Residues 17-324 form the IF rod domain; it reads EKYQMLELNH…ALLDSEGLRI (308 aa). Residues 53 to 64 are linker 1; that stretch reads KSSRDPAGQRKA. The interval 65 to 160 is coil 1B; the sequence is QEEALSQARR…QVHQENMETM (96 aa). A linker 12 region spans residues 161–183; it reads QASLKQTKQVLMAPQRVQATSIP. Residues 184-203 form a coil 2A region; it reads DLGQEYGYKAAQAWQEAANN. Positions 204 to 206 are linker 2; it reads YQK. The coil 2B stretch occupies residues 207–324; it reads QVGRLEESLN…ALLDSEGLRI (118 aa). Positions 325-1265 are tail; it reads DRPTPNKTSS…EGDSWSSGDE (941 aa). Over residues 383–402 the composition is skewed to polar residues; sequence PSWTLTRGTPQRPPSSTSMT. Disordered stretches follow at residues 383 to 521, 667 to 830, 863 to 1073, 1093 to 1116, and 1232 to 1265; these read PSWT…TEVS, FEVE…PDME, HESL…KASQ, AQTT…LESS, and IRDD…SGDE. Residues 403-418 show a composition bias toward basic and acidic residues; sequence EKTEDHISEETKRSAE. A compositionally biased stretch (polar residues) spans 422-441; it reads DQLQQEKVQQDWTLESTLPK. A compositionally biased stretch (basic and acidic residues) spans 444 to 459; it reads AEPKPELQPEEIKVED. Positions 479–496 are enriched in polar residues; it reads LTSVPAEQQGSMSQTPET. Composition is skewed to acidic residues over residues 508 to 520 and 730 to 739; these read EVSE…DTEV and LNEDQSEAEE. 3 stretches are compositionally biased toward basic and acidic residues: residues 784–796, 803–819, and 863–897; these read YKSD…HIGE, EKER…RFNT, and HESL…KEED. The span at 901-910 shows a compositional bias: polar residues; it reads FEQNENQQLT. Residues 911–935 show a composition bias toward basic and acidic residues; sequence EHQHVHTEQVEDKPVHSHETQEHVN. Over residues 943-956 the composition is skewed to low complexity; that stretch reads SERSQQEQLEESSL. Over residues 1015–1043 the composition is skewed to polar residues; the sequence is PNASQCFQNTSLLAAATPNEQPLTFTNEV. Positions 1061–1070 are enriched in basic and acidic residues; it reads SEEKSTDEPK. Polar residues-rich tracts occupy residues 1105–1116 and 1242–1251; these read SISPVNENLESS and PAQSKIVQSD. The segment covering 1252–1265 has biased composition (acidic residues); sequence DSADEGDSWSSGDE.

The protein belongs to the intermediate filament family. Forms homodimers and homotetramers in vitro. In mixtures with other intermediate filament proteins such as vimentin and alpha-internexin, preferentially forms heterodimers. In terms of tissue distribution, widely expressed throughout the developing nervous system at 24 hours post-fertilization (hpf). As development progresses, expression becomes restricted to proliferative zones of the developing and postembryonic central nervous system. In the peripheral nervous system, expressed in the cranial ganglia. Also expressed in mesodermal muscle precursor cells and in cranial mesenchymal tissue.

In terms of biological role, promotes the disassembly of phosphorylated vimentin intermediate filaments (IF) during mitosis and may play a role in the trafficking and distribution of IF proteins and other cellular factors to daughter cells during progenitor cell division. Required for survival, renewal and mitogen-stimulated proliferation of neural progenitor cells. Required for brain and eye development. This Danio rerio (Zebrafish) protein is Nestin (nes).